The sequence spans 242 residues: Probable transcriptional regulatory protein EUBREC_1961 (242 aa).

This sequence belongs to the TACO1 family.

The protein resides in the cytoplasm. The protein is Probable transcriptional regulatory protein EUBREC_1961 of Agathobacter rectalis (strain ATCC 33656 / DSM 3377 / JCM 17463 / KCTC 5835 / VPI 0990) (Eubacterium rectale).